Here is a 211-residue protein sequence, read N- to C-terminus: 1-deoxy-D-xylulose 5-phosphate reductoisomerase (211 aa).

Asp-14 is a Mn(2+) binding site. 1-deoxy-D-xylulose 5-phosphate is bound by residues Ser-15, Glu-16, Ser-40, His-63, Ser-76, Asn-81, Lys-82, and Glu-85. Glu-16 serves as a coordination point for Mn(2+). A Mn(2+)-binding site is contributed by Glu-85.

It belongs to the DXR family. Mn(2+) serves as cofactor. It depends on Mg(2+) as a cofactor. As to expression, mostly expressed in flowers and, to a lower extent, in leaves.

It is found in the plastid. The protein resides in the chloroplast stroma. It catalyses the reaction 2-C-methyl-D-erythritol 4-phosphate + NADP(+) = 1-deoxy-D-xylulose 5-phosphate + NADPH + H(+). The protein operates within isoprenoid biosynthesis; isopentenyl diphosphate biosynthesis via DXP pathway; isopentenyl diphosphate from 1-deoxy-D-xylulose 5-phosphate: step 1/6. In terms of biological role, enzyme of the plastid non-mevalonate pathway for isoprenoid biosynthesis that catalyzes the NADPH-dependent rearrangement and reduction of 1-deoxy-D-xylulose-5-phosphate (DXP) to 2-C-methyl-D-erythritol 4-phosphate (MEP). Required for chloroplast development. The protein is 1-deoxy-D-xylulose 5-phosphate reductoisomerase of Thymus vulgaris (Thyme).